We begin with the raw amino-acid sequence, 351 residues long: Ion-translocating oxidoreductase complex subunit D (351 aa).

Transmembrane regions (helical) follow at residues 20–40 (IMLL…YFFG), 44–64 (LIQV…TLSL), 89–109 (LPPL…IIIA), and 123–143 (PAMI…TSWL). An FMN phosphoryl threonine modification is found at Thr187. The next 5 helical transmembrane spans lie at 215–235 (LSGI…LFLL), 244–264 (IPVS…VIAP), 267–287 (FAPP…FFIA), 301–321 (LIFG…GGYP), and 322–342 (DGVA…DYYT).

Belongs to the NqrB/RnfD family. As to quaternary structure, the complex is composed of six subunits: RnfA, RnfB, RnfC, RnfD, RnfE and RnfG. The cofactor is FMN.

The protein resides in the cell inner membrane. Functionally, part of a membrane-bound complex that couples electron transfer with translocation of ions across the membrane. The sequence is that of Ion-translocating oxidoreductase complex subunit D from Pectobacterium carotovorum subsp. carotovorum (strain PC1).